Here is a 313-residue protein sequence, read N- to C-terminus: UbiA prenyltransferase claS (313 aa).

Helical transmembrane passes span Phe-30–Leu-52 and Thr-57–Trp-79. Positions Asp-81–Asp-88 match the NDxxDxxxD motif. Residues Asp-84 and Asp-88 each contribute to the Mg(2+) site. 3 helical membrane passes run Ile-99–Met-121, Ala-131–Leu-148, and Trp-155–Gly-177. Positions 205 and 209 each coordinate Mg(2+). The DxxxD motif lies at Asp-205–Asp-209. A YxxxK motif is present at residues Asp-205 to Asp-209. The next 3 helical transmembrane spans lie at Pro-227 to Asn-247, Glu-250 to Trp-270, and Ala-293 to Met-313.

This sequence belongs to the UbiA prenyltransferase family. Mg(2+) is required as a cofactor.

The protein localises to the membrane. It carries out the reaction hydroquinone + (2E)-geranyl diphosphate = (2E)-geranylhydroquinone + diphosphate. Its pathway is secondary metabolite biosynthesis; terpenoid biosynthesis. In terms of biological role, prenyltransferase; part of the gene cluster that mediates the biosynthesis of clavilactone A, a meroterpenoid that features a unique benzo-fused ten-membered carbocyclic ring unit with an alpha,beta-epoxy-gamma-lactone moiety, forming an intriguing 10/5/3 tricyclic nested skeleton. ClaR, ClaS and ClaT are sufficient to produce clavilactone A. Within the pathway, claS acts as an atypical UbiA prenyltransferase that transfers geranyl pyrophosphate (GPP) to hydroquinone (HYQ) instead of p-hydroxybenzoic acid (PHB), producing the first intermediate geranylhydroquinone. The cytochrome P450 monooxygenase claR then catalyzes the diradical coupling reaction between the intramolecular hydroquinone and allyl moieties to form the benzo-fused ten-membered carbocyclic ring unit of wigantol. Finally the cytochrome P450 monooxygenase claT exquisitely and stereoselectively assembles the alpha,beta-epoxy-gamma-lactone moiety, producing clavilactone A via arnebinol A. This Ampulloclitocybe clavipes (Club foot) protein is UbiA prenyltransferase claS.